The chain runs to 329 residues: GTPase Obg (329 aa).

The 159-residue stretch at 1-159 (MQFIDQARIT…WFLQLELKLL (159 aa)) folds into the Obg domain. The OBG-type G domain occupies 160–328 (AEVGIIGLPN…LLAQVWKELG (169 aa)). Residues 166–173 (GLPNAGKS), 191–195 (FTTLV), 213–216 (DIPG), 280–283 (NKQE), and 309–311 (SAA) contribute to the ATP site. Residues Ser-173 and Thr-193 each coordinate Mg(2+).

This sequence belongs to the TRAFAC class OBG-HflX-like GTPase superfamily. OBG GTPase family. In terms of assembly, monomer. It depends on Mg(2+) as a cofactor.

It is found in the cytoplasm. In terms of biological role, an essential GTPase which binds GTP, GDP and possibly (p)ppGpp with moderate affinity, with high nucleotide exchange rates and a fairly low GTP hydrolysis rate. Plays a role in control of the cell cycle, stress response, ribosome biogenesis and in those bacteria that undergo differentiation, in morphogenesis control. The protein is GTPase Obg of Prochlorococcus marinus (strain MIT 9303).